The following is a 382-amino-acid chain: Putative glutamate--cysteine ligase 2-1 (382 aa).

It belongs to the glutamate--cysteine ligase type 2 family. YbdK subfamily.

The enzyme catalyses L-cysteine + L-glutamate + ATP = gamma-L-glutamyl-L-cysteine + ADP + phosphate + H(+). ATP-dependent carboxylate-amine ligase which exhibits weak glutamate--cysteine ligase activity. The polypeptide is Putative glutamate--cysteine ligase 2-1 (Frankia alni (strain DSM 45986 / CECT 9034 / ACN14a)).